The sequence spans 467 residues: Asparagine--tRNA ligase (467 aa).

Belongs to the class-II aminoacyl-tRNA synthetase family. As to quaternary structure, homodimer.

It is found in the cytoplasm. The catalysed reaction is tRNA(Asn) + L-asparagine + ATP = L-asparaginyl-tRNA(Asn) + AMP + diphosphate + H(+). The polypeptide is Asparagine--tRNA ligase (Histophilus somni (strain 129Pt) (Haemophilus somnus)).